A 331-amino-acid polypeptide reads, in one-letter code: Ketol-acid reductoisomerase (NADP(+)) (331 aa).

A KARI N-terminal Rossmann domain is found at 1–182 (MATLYYDTDA…GGTRAGILET (182 aa)). Residues 25 to 28 (YGSQ), Ser-51, Ser-53, and 83 to 86 (DEFQ) each bind NADP(+). His-108 is an active-site residue. Gly-134 contributes to the NADP(+) binding site. The 146-residue stretch at 183 to 328 (NFKEETETDL…KGLRAMFSWL (146 aa)) folds into the KARI C-terminal knotted domain. Mg(2+)-binding residues include Asp-191, Glu-195, Glu-227, and Glu-231. Ser-252 lines the substrate pocket.

The protein belongs to the ketol-acid reductoisomerase family. Mg(2+) is required as a cofactor.

The catalysed reaction is (2R)-2,3-dihydroxy-3-methylbutanoate + NADP(+) = (2S)-2-acetolactate + NADPH + H(+). It carries out the reaction (2R,3R)-2,3-dihydroxy-3-methylpentanoate + NADP(+) = (S)-2-ethyl-2-hydroxy-3-oxobutanoate + NADPH + H(+). The protein operates within amino-acid biosynthesis; L-isoleucine biosynthesis; L-isoleucine from 2-oxobutanoate: step 2/4. Its pathway is amino-acid biosynthesis; L-valine biosynthesis; L-valine from pyruvate: step 2/4. Its function is as follows. Involved in the biosynthesis of branched-chain amino acids (BCAA). Catalyzes an alkyl-migration followed by a ketol-acid reduction of (S)-2-acetolactate (S2AL) to yield (R)-2,3-dihydroxy-isovalerate. In the isomerase reaction, S2AL is rearranged via a Mg-dependent methyl migration to produce 3-hydroxy-3-methyl-2-ketobutyrate (HMKB). In the reductase reaction, this 2-ketoacid undergoes a metal-dependent reduction by NADPH to yield (R)-2,3-dihydroxy-isovalerate. The polypeptide is Ketol-acid reductoisomerase (NADP(+)) (Synechococcus sp. (strain RCC307)).